We begin with the raw amino-acid sequence, 1920 residues long: rRNA biogenesis protein RRP5 (1920 aa).

The disordered stretch occupies residues 1 to 65; sequence MVVPQKKFAN…GTSLSKKERE (65 aa). S1 motif domains are found at residues 128–210, 226–291, 314–384, 400–473, 490–557, 577–646, 661–733, 753–822, 866–930, 958–1031, 1054–1129, 1153–1224, 1260–1334, 1369–1438, and 1459–1529; these read GMKL…LSLR, GMVF…LSSD, GMMV…LTLS, GDIF…GTLK, GMVT…VTYK, GLVT…LSFM, GSIV…LSSK, NSVV…LSLK, GSLI…LSLR, EVHQ…LLLD, GSVV…LSVK, GQCV…LVQR, GDIL…LSLR, DMGV…VTLK, and GDMI…LGMK. Disordered regions lie at residues 1535-1555 and 1605-1652; these read NGDD…ECDP and TDFD…LEHH. The segment covering 1620–1652 has biased composition (basic and acidic residues); sequence NKDEKSKRREKQKDKEEREKKIQAAEGRLLEHH. HAT repeat units follow at residues 1651 to 1683, 1685 to 1722, 1726 to 1758, 1759 to 1791, 1828 to 1860, and 1862 to 1897; these read HHAP…FMLS, ADIE…LENE, PPEE…YERT, EQYK…SSLK, GVAD…QEIR, and GEDD…YEKS.

Highly expressed in flowers and at lower levels in roots, leaves, stems and siliques.

Its subcellular location is the nucleus. The protein resides in the nucleolus. In terms of biological role, involved in the biogenesis of ribosomal RNA (rRNA). Required for the formation of 5.8S rRNA. Required for normal development of female gametophytes. The protein is rRNA biogenesis protein RRP5 of Arabidopsis thaliana (Mouse-ear cress).